The primary structure comprises 278 residues: Polyamine aminopropyltransferase (278 aa).

The PABS domain maps to 3–240; the sequence is EGWFTEAVED…GWWSATLMVN (238 aa). Residue glutamine 33 coordinates S-methyl-5'-thioadenosine. Positions 64 and 88 each coordinate spermidine. Residues glutamate 108 and 139–140 each bind S-methyl-5'-thioadenosine; that span reads DG. The active-site Proton acceptor is the aspartate 158. 158–161 contributes to the spermidine binding site; it reads DSTD. Proline 165 contacts S-methyl-5'-thioadenosine.

It belongs to the spermidine/spermine synthase family. In terms of assembly, homodimer or homotetramer.

It is found in the cytoplasm. The catalysed reaction is S-adenosyl 3-(methylsulfanyl)propylamine + putrescine = S-methyl-5'-thioadenosine + spermidine + H(+). The protein operates within amine and polyamine biosynthesis; spermidine biosynthesis; spermidine from putrescine: step 1/1. In terms of biological role, catalyzes the irreversible transfer of a propylamine group from the amino donor S-adenosylmethioninamine (decarboxy-AdoMet) to putrescine (1,4-diaminobutane) to yield spermidine. This is Polyamine aminopropyltransferase from Halorhodospira halophila (strain DSM 244 / SL1) (Ectothiorhodospira halophila (strain DSM 244 / SL1)).